A 234-amino-acid chain; its full sequence is Transcription factor UDT1 (234 aa).

The interval 1 to 51 (MPRRARARGGGGGGGEEVKVEDDFIDSVLNFGGGGGGEEDGDDGEEEQQQQ) is disordered. Residues 37 to 48 (GEEDGDDGEEEQ) are compositionally biased toward acidic residues. The segment at 61–74 (EFKSKNLEAERRRR) is basic motif; degenerate. The region spanning 61 to 110 (EFKSKNLEAERRRRGRLNGNIFALRAVVPKITKMSKEATLSDAIEHIKNL) is the bHLH domain. Positions 75–110 (GRLNGNIFALRAVVPKITKMSKEATLSDAIEHIKNL) are helix-loop-helix motif.

This sequence belongs to the bHLH protein family.

It is found in the nucleus. In terms of biological role, transcription factor that plays a crucial role in tapetum development. Required for male fertility and pollen differentiation within the developing anther. Plays a major role in maintaining tapetum development, starting in early meiosis. Required for pollen mother cell meiosis. May regulate the anther-specific cysteine protease CP1 and lipid-transfer proteins C4 and C6. Required for anther development. Functions in parallel with GAMYB to regulate early anther development. Functions upstream of the transcription factor TDR and may positively regulate its transcription. This chain is Transcription factor UDT1, found in Oryza sativa subsp. japonica (Rice).